The primary structure comprises 552 residues: Phosphoglucomutase (552 aa).

Ser143 acts as the Phosphoserine intermediate in catalysis. Mg(2+) contacts are provided by Ser143, Asp295, Asp297, and Asp299.

This sequence belongs to the phosphohexose mutase family. It depends on Mg(2+) as a cofactor.

It carries out the reaction alpha-D-glucose 1-phosphate = alpha-D-glucose 6-phosphate. The protein operates within glycolipid metabolism; diglucosyl-diacylglycerol biosynthesis. In terms of biological role, catalyzes the interconversion between glucose-6-phosphate and alpha-glucose-1-phosphate. This is the first step in the biosynthesis of diglucosyl-diacylglycerol (Glc2-DAG), i.e. the predominant glycolipid found in the S.aureus membrane, which is also used as a membrane anchor for lipoteichoic acid (LTA). This chain is Phosphoglucomutase (pgcA), found in Staphylococcus aureus (strain bovine RF122 / ET3-1).